A 329-amino-acid chain; its full sequence is Serine/threonine-protein phosphatase PP2A catalytic subunit (329 aa).

Positions 1-25 are disordered; that stretch reads MDNNMEIDAARSPEPHHLSPTTDPG. Residues 8-17 are compositionally biased toward basic and acidic residues; sequence DAARSPEPHH. Mn(2+) contacts are provided by D77, H79, D105, and N137. H138 (proton donor) is an active-site residue. Residues H187 and H261 each coordinate Mn(2+). Position 329 is a leucine methyl ester (L329).

Belongs to the PPP phosphatase family. PP-2A subfamily. The cofactor is Mn(2+).

It catalyses the reaction O-phospho-L-seryl-[protein] + H2O = L-seryl-[protein] + phosphate. The enzyme catalyses O-phospho-L-threonyl-[protein] + H2O = L-threonyl-[protein] + phosphate. Functionally, involved in hyphal morphogenesis. The polypeptide is Serine/threonine-protein phosphatase PP2A catalytic subunit (pphA) (Emericella nidulans (strain FGSC A4 / ATCC 38163 / CBS 112.46 / NRRL 194 / M139) (Aspergillus nidulans)).